The sequence spans 269 residues: Phosphatidylglycerol--prolipoprotein diacylglyceryl transferase (269 aa).

4 helical membrane-spanning segments follow: residues 14–34, 49–69, 89–109, and 118–138; these read IVQI…AGII, VAPE…IPMA, VFAI…GLLA, and GYSL…GQAI. Arg140 is an a 1,2-diacyl-sn-glycero-3-phospho-(1'-sn-glycerol) binding site. Transmembrane regions (helical) follow at residues 180–200, 208–228, and 240–260; these read TFLY…FVFF, GSIA…IEGL, and TAQL…WWLN.

The protein belongs to the Lgt family.

It is found in the cell inner membrane. It catalyses the reaction L-cysteinyl-[prolipoprotein] + a 1,2-diacyl-sn-glycero-3-phospho-(1'-sn-glycerol) = an S-1,2-diacyl-sn-glyceryl-L-cysteinyl-[prolipoprotein] + sn-glycerol 1-phosphate + H(+). Its pathway is protein modification; lipoprotein biosynthesis (diacylglyceryl transfer). In terms of biological role, catalyzes the transfer of the diacylglyceryl group from phosphatidylglycerol to the sulfhydryl group of the N-terminal cysteine of a prolipoprotein, the first step in the formation of mature lipoproteins. In Gloeobacter violaceus (strain ATCC 29082 / PCC 7421), this protein is Phosphatidylglycerol--prolipoprotein diacylglyceryl transferase.